Consider the following 495-residue polypeptide: Protein adenylyltransferase Fic (495 aa).

Positions 1–23 (MGTEAEPPSPPSPPAQQQEQANP) are disordered. A helical transmembrane segment spans residues 36-58 (LYRLVLFFIAGSLTAWMFHAFSS). TPR repeat units lie at residues 121–154 (ALVS…APRH) and 155–189 (PEVL…SPSN). Residues 246–251 (SVGIEG) carry the Inhibitory (S/T)XXXE(G/N) motif motif. Residues Glu-250 and 331–334 (VGGH) contribute to the ATP site. The region spanning 300–435 (ITIKDILELH…IRPFVRFIAD (136 aa)) is the Fido domain. The active site involves His-378. Residues 382–389 (DGNGRTSR), 414–415 (YY), and Asn-422 contribute to the ATP site.

Belongs to the fic family. In terms of assembly, homodimer.

The protein resides in the membrane. The catalysed reaction is L-tyrosyl-[protein] + ATP = O-(5'-adenylyl)-L-tyrosyl-[protein] + diphosphate. It catalyses the reaction L-threonyl-[protein] + ATP = 3-O-(5'-adenylyl)-L-threonyl-[protein] + diphosphate. The enzyme catalyses 3-O-(5'-adenylyl)-L-threonyl-[protein] + H2O = L-threonyl-[protein] + AMP + H(+). The side chain of Glu-250 determines which of the two opposing activities (AMPylase or de-AMPylase) will take place. In response to endoplasmic reticulum stress, mediates de-AMPylase activity. Adenylyltransferase activity is inhibited by the inhibitory helix present at the N-terminus: Glu-250 binds ATP and competes with ATP-binding at Arg-389, thereby preventing adenylyltransferase activity. In unstressed cells, disengagement of Glu-250 promotes adenylyltransferase activity. Activation dissociates ATP-binding from Glu-250, allowing ordered binding of the entire ATP moiety with the alpha-phosphate in an orientation that is productive for accepting an incoming target hydroxyl side chain. Its function is as follows. Protein that can both mediate the addition of adenosine 5'-monophosphate (AMP) to specific residues of target proteins (AMPylation), and the removal of the same modification from target proteins (de-AMPylation), depending on the context. The side chain of Glu-250 determines which of the two opposing activities (AMPylase or de-AMPylase) will take place. Acts as a key regulator of the unfolded protein response (UPR) by mediating AMPylation or de-AMPylation of Hsc70-3/BiP. In unstressed cells, acts as an adenylyltransferase by mediating AMPylation of Hsc70-3/BiP at 'Thr-518', thereby inactivating it. In response to endoplasmic reticulum stress, acts as a phosphodiesterase by mediating removal of ATP (de-AMPylation) from Hsc70-3/BiP at 'Thr-518', leading to restore HSPA5/BiP activity. In Drosophila erecta (Fruit fly), this protein is Protein adenylyltransferase Fic.